A 325-amino-acid polypeptide reads, in one-letter code: Transcription initiation factor IIB 2 (325 aa).

Polar residues predominate over residues 1-13 (MSDSTIRTYSSDQ). The disordered stretch occupies residues 1–29 (MSDSTIRTYSSDQRQTDNDETVSTPDEDV). A TFIIB-type zinc finger spans residues 28–58 (DVLTCPECGGQVIDDEEHGESVCVDCGLVVE). Zn(2+) is bound by residues C32, C35, C50, and C53. Positions 73–93 (STEKDEKSRVGAPTTNMMHDK) are disordered. 2 consecutive repeat copies span residues 144 to 227 (GEIE…VREL) and 238 to 319 (QYVP…ELLE).

Belongs to the TFIIB family.

In terms of biological role, stabilizes TBP binding to an archaeal box-A promoter. Also responsible for recruiting RNA polymerase II to the pre-initiation complex (DNA-TBP-TFIIB). In Halobacterium salinarum (strain ATCC 700922 / JCM 11081 / NRC-1) (Halobacterium halobium), this protein is Transcription initiation factor IIB 2.